Reading from the N-terminus, the 274-residue chain is Oxidized low-density lipoprotein receptor 1 (274 aa).

Residues M1–D16 are compositionally biased toward basic and acidic residues. The disordered stretch occupies residues M1–K25. Residues M1–S31 are Cytoplasmic-facing. A helical; Signal-anchor for type II membrane protein transmembrane segment spans residues S32–I54. S-palmitoyl cysteine attachment occurs at residues C36 and C46. The interval M55–W150 is neck. At M55–E274 the chain is on the extracellular side. N-linked (GlcNAc...) asparagine glycans are attached at residues N73 and N139. A coiled-coil region spans residues Q84–N139. Intrachain disulfides connect C144–C155, C172–C264, and C243–C256. Residues H151–Q265 enclose the C-type lectin domain.

In terms of assembly, homodimer; disulfide-linked. May form a hexamer composed of 3 homodimers. Interacts with HSP70. In terms of processing, N-glycosylated.

The protein localises to the cell membrane. It localises to the membrane raft. The protein resides in the secreted. In terms of biological role, receptor that mediates the recognition, internalization and degradation of oxidatively modified low density lipoprotein (oxLDL) by vascular endothelial cells. OxLDL is a marker of atherosclerosis that induces vascular endothelial cell activation and dysfunction, resulting in pro-inflammatory responses, pro-oxidative conditions and apoptosis. Its association with oxLDL induces the activation of NF-kappa-B through an increased production of intracellular reactive oxygen and a variety of pro-atherogenic cellular responses including a reduction of nitric oxide (NO) release, monocyte adhesion and apoptosis. In addition to binding oxLDL, it acts as a receptor for the HSP70 protein involved in antigen cross-presentation to naive T-cells in dendritic cells, thereby participating in cell-mediated antigen cross-presentation. Also involved in inflammatory process, by acting as a leukocyte-adhesion molecule at the vascular interface in endotoxin-induced inflammation. Also acts as a receptor for advanced glycation end (AGE) products, activated platelets, monocytes, apoptotic cells and both Gram-negative and Gram-positive bacteria. The sequence is that of Oxidized low-density lipoprotein receptor 1 (OLR1) from Oryctolagus cuniculus (Rabbit).